Here is a 633-residue protein sequence, read N- to C-terminus: Leucine-rich repeat and IQ domain-containing protein 3 (633 aa).

LRR repeat units follow at residues 51 to 72 (SLRVCIFSNNFLTDIQPLQSCK), 73 to 94 (KLIKLDLHGNQIKTLPDKNFWS), and 98 to 119 (NLKLLYLHDNGFSKLKNICVLS). In terms of domain architecture, LRRCT spans 132–179 (CPVSLKKGYRHVLVNSIWPLKALDHHVISDEEIIQNWRLPERFKTFSP). The IQ domain occupies 215 to 244 (HNSPVLIIQRWIRGFIVRKHLSPYFKHKKH). Positions 324-343 (SKQPRHHIHKGQKAMKAESE) are disordered. The segment covering 325–336 (KQPRHHIHKGQK) has biased composition (basic residues). Positions 556–617 (IEKWEEQKYK…AKVEYIKTFY (62 aa)) form a coiled coil.

The polypeptide is Leucine-rich repeat and IQ domain-containing protein 3 (Lrriq3) (Mus musculus (Mouse)).